The primary structure comprises 47 residues: Putative heat shock protein HSP90 (47 aa).

Residue Arg47 coordinates ATP.

The protein belongs to the heat shock protein 90 family. As to quaternary structure, homodimer.

The protein resides in the cytoplasm. Functionally, putative molecular chaperone that may promote the maturation, structural maintenance and proper regulation of specific target proteins. The sequence is that of Putative heat shock protein HSP90 from Populus euphratica (Euphrates poplar).